The chain runs to 764 residues: Putative alpha-1,3-mannosyltransferase MNN13 (764 aa).

Residues 1–13 (MIKPILGTKKIRR) are Cytoplasmic-facing. Residues 14-34 (VICIIIGLFCILLLIGIFKHN) form a helical membrane-spanning segment. Residues 35-764 (STNSVNNEAS…YLGDVWVGKY (730 aa)) are Lumenal-facing. Residues N45 and N204 are each glycosylated (N-linked (GlcNAc...) asparagine).

This sequence belongs to the MNN1/MNT family.

It is found in the golgi apparatus membrane. It functions in the pathway protein modification; protein glycosylation. In terms of biological role, responsible for addition of the terminal mannose residues to the outer chain of core N-linked polysaccharides and to O-linked mannotriose. Implicated in late Golgi modifications. The chain is Putative alpha-1,3-mannosyltransferase MNN13 (MNN13) from Candida albicans (strain SC5314 / ATCC MYA-2876) (Yeast).